The primary structure comprises 1023 residues: Probable histidine kinase 3 (1023 aa).

Over 1–80 the chain is Cytoplasmic; that stretch reads MDEMSCGGGG…RGWRVVRETW (80 aa). The helical transmembrane segment at 81-101 threads the bilayer; it reads WWVLLLWILAGSLGSFYLFLF. The Extracellular portion of the chain corresponds to 102 to 387; it reads MNAQSLDKRR…CRFEKKPPWP (286 aa). Positions 151-352 constitute a CHASE domain; that stretch reads TPSAIDQMTF…TNESPISMYG (202 aa). The chain crosses the membrane as a helical span at residues 388–408; it reads WLAITSSFGTLVIALLTGHIF. Over 409 to 1023 the chain is Cytoplasmic; it reads QATVHRIAKV…RFFQNHDQVE (615 aa). The region spanning 445 to 715 is the Histidine kinase domain; sequence TVSHEIRTPM…TFTFTAVLMR (271 aa). Position 448 is a phosphohistidine; by autocatalysis (His-448). 2 Response regulatory domains span residues 732–854 and 880–1016; these read NALV…RRAL and QIIV…ARFF. 4-aspartylphosphate is present on Asp-783. The disordered stretch occupies residues 812–831; the sequence is LFLLGSSASSPKGGSDTSRE. Polar residues predominate over residues 817–827; sequence SSASSPKGGSD. Asp-930 carries the 4-aspartylphosphate modification.

Activation probably requires a transfer of a phosphate group between a His in the transmitter domain and an Asp of the receiver domain. As to expression, highly expressed in young leaves and at lower levels in roots, mature leaves, stems and spikelets.

It is found in the cell membrane. It catalyses the reaction ATP + protein L-histidine = ADP + protein N-phospho-L-histidine.. Functionally, cytokinin receptor related to bacterial two-component regulators. Functions as a histidine kinase and transmits the stress signal to a downstream MAPK cascade. This Oryza sativa subsp. japonica (Rice) protein is Probable histidine kinase 3.